The chain runs to 413 residues: Serine hydroxymethyltransferase (413 aa).

Residues L119 and 123 to 125 (GHL) contribute to the (6S)-5,6,7,8-tetrahydrofolate site. Residue K228 is modified to N6-(pyridoxal phosphate)lysine. 351 to 353 (SPF) provides a ligand contact to (6S)-5,6,7,8-tetrahydrofolate.

The protein belongs to the SHMT family. Homodimer. Pyridoxal 5'-phosphate serves as cofactor.

It localises to the cytoplasm. It carries out the reaction (6R)-5,10-methylene-5,6,7,8-tetrahydrofolate + glycine + H2O = (6S)-5,6,7,8-tetrahydrofolate + L-serine. It functions in the pathway one-carbon metabolism; tetrahydrofolate interconversion. It participates in amino-acid biosynthesis; glycine biosynthesis; glycine from L-serine: step 1/1. Functionally, catalyzes the reversible interconversion of serine and glycine with tetrahydrofolate (THF) serving as the one-carbon carrier. This reaction serves as the major source of one-carbon groups required for the biosynthesis of purines, thymidylate, methionine, and other important biomolecules. Also exhibits THF-independent aldolase activity toward beta-hydroxyamino acids, producing glycine and aldehydes, via a retro-aldol mechanism. This is Serine hydroxymethyltransferase from Anoxybacillus flavithermus (strain DSM 21510 / WK1).